A 158-amino-acid polypeptide reads, in one-letter code: Glutamyl-tRNA(Gln) amidotransferase subunit C, mitochondrial (158 aa).

The protein belongs to the GatC family. Subunit of the heterotrimeric GatCAB amidotransferase (AdT) complex, composed of A, B and C subunits.

Its subcellular location is the mitochondrion. The catalysed reaction is L-glutamyl-tRNA(Gln) + L-glutamine + ATP + H2O = L-glutaminyl-tRNA(Gln) + L-glutamate + ADP + phosphate + H(+). Its function is as follows. Allows the formation of correctly charged Gln-tRNA(Gln) through the transamidation of misacylated Glu-tRNA(Gln) in the mitochondria. The reaction takes place in the presence of glutamine and ATP through an activated gamma-phospho-Glu-tRNA(Gln). The polypeptide is Glutamyl-tRNA(Gln) amidotransferase subunit C, mitochondrial (Drosophila grimshawi (Hawaiian fruit fly)).